Reading from the N-terminus, the 125-residue chain is Small ribosomal subunit protein eS6 (125 aa).

This sequence belongs to the eukaryotic ribosomal protein eS6 family.

The chain is Small ribosomal subunit protein eS6 from Thermococcus onnurineus (strain NA1).